The primary structure comprises 520 residues: Cyclic GMP-AMP synthase-like receptor (520 aa).

Residues Ser-68 and Glu-80 to Asp-82 each bind ATP. The Mg(2+) site is built by Glu-80, Asp-82, and Asp-198. Residue Asp-198 coordinates GTP. Position 264 (Lys-264) interacts with ATP. Leu-288 and Asp-294 together coordinate Mn(2+).

Belongs to the mab-21 family. Mg(2+) serves as cofactor. Requires Mn(2+) as cofactor.

It catalyses the reaction GTP + ATP = 2',3'-cGAMP + 2 diphosphate. The catalysed reaction is GTP + ATP = pppGp(2'-5')A + diphosphate. It carries out the reaction pppGp(2'-5')A = 2',3'-cGAMP + diphosphate. Functionally, nucleotidyltransferase that catalyzes the formation of cyclic GMP-AMP (2',3'-cGAMP) from ATP and GTP and plays a key role in innate immunity. Acts as a key sensor of double-stranded RNA (dsRNA), the presence of dsRNA in the cytoplasm being a danger signal that triggers the immune responses. Directly binds dsRNA, activating the nucleotidyltransferase activity, leading to synthesis of 2',3'-cGAMP, a second messenger that binds to and activates Sting, thereby triggering the immune response via activation of the NF-kappa-B transcription factor. The sequence is that of Cyclic GMP-AMP synthase-like receptor from Microplitis demolitor (Parasitoid wasp).